Here is a 140-residue protein sequence, read N- to C-terminus: Nucleoside diphosphate kinase (140 aa).

Residues Lys-11, Phe-59, Arg-87, Thr-93, Arg-104, and Asn-114 each coordinate ATP. His-117 serves as the catalytic Pros-phosphohistidine intermediate.

It belongs to the NDK family. Homotetramer. Mg(2+) serves as cofactor.

It is found in the cytoplasm. The enzyme catalyses a 2'-deoxyribonucleoside 5'-diphosphate + ATP = a 2'-deoxyribonucleoside 5'-triphosphate + ADP. The catalysed reaction is a ribonucleoside 5'-diphosphate + ATP = a ribonucleoside 5'-triphosphate + ADP. Major role in the synthesis of nucleoside triphosphates other than ATP. The ATP gamma phosphate is transferred to the NDP beta phosphate via a ping-pong mechanism, using a phosphorylated active-site intermediate. In Roseobacter denitrificans (strain ATCC 33942 / OCh 114) (Erythrobacter sp. (strain OCh 114)), this protein is Nucleoside diphosphate kinase.